A 691-amino-acid chain; its full sequence is T-box transcription factor TBX2-B (691 aa).

A DNA-binding region (T-box) is located at residues 104–277 (LWDQFHKIGT…HNPFAKGFRD (174 aa)). 2 disordered regions span residues 301–440 (CKAD…SLSK) and 612–691 (NLLT…ESPK). Residues 325-335 (HSPLSAAPSPL) are compositionally biased toward low complexity. Basic and acidic residues-rich tracts occupy residues 340-361 (TNRE…EVRS), 378-402 (RLED…RKDG), and 415-433 (SLEK…KSDP). The segment covering 624–639 (PGSESSKPGSSRESSP) has biased composition (low complexity). Residues 659–684 (SMKDSINELQRIQRLVSGLERQREVS) adopt a coiled-coil conformation. Residues 678–691 (ERQREVSPGRESPK) are compositionally biased toward basic and acidic residues.

Binds DNA as a monomer.

It localises to the nucleus. Functionally, transcription factor which acts as a transcriptional repressor. May also function as a transcriptional activator. Binds to the palindromic T site 5'-TTCACACCTAGGTGTGAA-3' DNA sequence, or a half-site, which are present in the regulatory region of several genes. The chain is T-box transcription factor TBX2-B (tbx2-b) from Xenopus laevis (African clawed frog).